Consider the following 375-residue polypeptide: Succinyl-diaminopimelate desuccinylase (375 aa).

Zn(2+) is bound at residue His-66. The active site involves Asp-68. Asp-99 contributes to the Zn(2+) binding site. Glu-133 functions as the Proton acceptor in the catalytic mechanism. Zn(2+)-binding residues include Glu-134, Glu-162, and His-348.

Belongs to the peptidase M20A family. DapE subfamily. As to quaternary structure, homodimer. It depends on Zn(2+) as a cofactor. Requires Co(2+) as cofactor.

It catalyses the reaction N-succinyl-(2S,6S)-2,6-diaminopimelate + H2O = (2S,6S)-2,6-diaminopimelate + succinate. The protein operates within amino-acid biosynthesis; L-lysine biosynthesis via DAP pathway; LL-2,6-diaminopimelate from (S)-tetrahydrodipicolinate (succinylase route): step 3/3. In terms of biological role, catalyzes the hydrolysis of N-succinyl-L,L-diaminopimelic acid (SDAP), forming succinate and LL-2,6-diaminopimelate (DAP), an intermediate involved in the bacterial biosynthesis of lysine and meso-diaminopimelic acid, an essential component of bacterial cell walls. This chain is Succinyl-diaminopimelate desuccinylase, found in Yersinia pseudotuberculosis serotype O:1b (strain IP 31758).